Reading from the N-terminus, the 780-residue chain is ATP-dependent 6-phosphofructokinase, muscle type (780 aa).

An N-acetylthreonine modification is found at Thr-2. The N-terminal catalytic PFK domain 1 stretch occupies residues Thr-2–His-390. Residues Gly-25, Arg-88–Cys-89, and Gly-118–Ser-121 each bind ATP. Residue Asp-119 participates in Mg(2+) binding. Ser-133 is subject to Phosphoserine. Substrate is bound by residues Ser-164–Asp-166, Arg-201, Met-208–Arg-210, Glu-264, Arg-292, and His-298–Arg-301. Asp-166 serves as the catalytic Proton acceptor. Ser-377 bears the Phosphoserine mark. The interdomain linker stretch occupies residues Val-391–His-401. The tract at residues Thr-402 to Val-780 is C-terminal regulatory PFK domain 2. Beta-D-fructose 2,6-bisphosphate-binding positions include Arg-471 and Thr-528–Asn-532. O-linked (GlcNAc) serine glycosylation occurs at Ser-530. Position 557 is an N6-(2-hydroxyisobutyryl)lysine (Lys-557). Beta-D-fructose 2,6-bisphosphate is bound by residues Arg-566, Met-573–Gly-575, Glu-629, Arg-655, and His-661–Gln-664. Ser-667 carries the phosphoserine modification. Arg-735 is a binding site for beta-D-fructose 2,6-bisphosphate. Ser-775 is modified (phosphoserine).

It belongs to the phosphofructokinase type A (PFKA) family. ATP-dependent PFK group I subfamily. Eukaryotic two domain clade 'E' sub-subfamily. As to quaternary structure, homo- and heterotetramers. Phosphofructokinase (PFK) enzyme functions as a tetramer composed of different combinations of 3 types of subunits, called PFKM (where M stands for Muscle), PFKL (Liver) and PFKP (Platelet). The composition of the PFK tetramer differs according to the tissue type it is present in. In muscles, it is composed of 4 PFKM subunits (also called M4). In the liver, the predominant form is a tetramer of PFKL subunits (L4). In erythrocytes, both PFKM and PFKL subunits randomly tetramerize to form M4, L4 and other combinations (ML3, M2L2, M3L). The kinetic and regulatory properties of the tetrameric enzyme are dependent on the subunit composition, hence can vary across tissues. Interacts (via C-terminus) with HK1 (via N-terminal spermatogenic cell-specific region). Requires Mg(2+) as cofactor. Post-translationally, glcNAcylation decreases enzyme activity.

The protein localises to the cytoplasm. It carries out the reaction beta-D-fructose 6-phosphate + ATP = beta-D-fructose 1,6-bisphosphate + ADP + H(+). Its pathway is carbohydrate degradation; glycolysis; D-glyceraldehyde 3-phosphate and glycerone phosphate from D-glucose: step 3/4. Allosterically activated by ADP, AMP, or fructose 2,6-bisphosphate, and allosterically inhibited by ATP or citrate. In terms of biological role, catalyzes the phosphorylation of D-fructose 6-phosphate to fructose 1,6-bisphosphate by ATP, the first committing step of glycolysis. In Homo sapiens (Human), this protein is ATP-dependent 6-phosphofructokinase, muscle type (PFKM).